The following is a 570-amino-acid chain: Probable metalloreductase AIM14 (570 aa).

Transmembrane regions (helical) follow at residues 21 to 41 (IKYGYYVLIISLVYLIGLALL), 70 to 90 (AIHLGILFFAVLIPFYYHYSL), 101 to 118 (LGRLSYALIPLNLFLTLR), 142 to 162 (IITVIGLLHGIFFIIKWAIDD), 177 to 197 (FVGFIISILVLFLLICSIGPM), 204 to 224 (LFYIVHNLVNVAFILLTPIHS), and 230 to 250 (FPFLLLNCTLLFIHIINRIVF). In terms of domain architecture, Ferric oxidoreductase spans 101–219 (LGRLSYALIP…NLVNVAFILL (119 aa)). Residues 250–388 (FAKSLMILNK…GGSGISFALP (139 aa)) form the FAD-binding FR-type domain. Residues 481–505 (SNFNSENADSNDNTPETSHSPTKEN) are compositionally biased toward polar residues. The interval 481–507 (SNFNSENADSNDNTPETSHSPTKENGS) is disordered.

This sequence belongs to the ferric reductase (FRE) family. AIM14 subfamily. Interacts with ribosomes.

It localises to the membrane. In terms of biological role, probable cell surface metalloreductase. May be involved in iron or copper homeostasis. The protein is Probable metalloreductase AIM14 (AIM14) of Saccharomyces cerevisiae (strain YJM789) (Baker's yeast).